An 81-amino-acid polypeptide reads, in one-letter code: MFSLFIENRYLHLLHALSLVTDVSRIQSHFGTLPRIKDEHRSHQESKYHFGGHVQIRFGSDQDWRQGHQSFLLKTGPCKKR.

In terms of tissue distribution, expressed in fetal brain.

This is an uncharacterized protein from Homo sapiens (Human).